A 726-amino-acid chain; its full sequence is Catalase-peroxidase (726 aa).

The segment at 1–33 (MSTTDDTHNTLSTGKCPFHQGGHDRSAGAGTAS) is disordered. Residues 105-226 (WHGAGTYRSI…LGATEMGLIY (122 aa)) constitute a cross-link (tryptophyl-tyrosyl-methioninium (Trp-Tyr) (with M-252)). His106 (proton acceptor) is an active-site residue. The segment at residues 226–252 (YVNPEGPDHSGEPLSAAAAIRATFGNM) is a cross-link (tryptophyl-tyrosyl-methioninium (Tyr-Met) (with W-105)). A heme b-binding site is contributed by His267.

It belongs to the peroxidase family. Peroxidase/catalase subfamily. Homodimer or homotetramer. It depends on heme b as a cofactor. In terms of processing, formation of the three residue Trp-Tyr-Met cross-link is important for the catalase, but not the peroxidase activity of the enzyme.

The enzyme catalyses H2O2 + AH2 = A + 2 H2O. It catalyses the reaction 2 H2O2 = O2 + 2 H2O. Functionally, bifunctional enzyme with both catalase and broad-spectrum peroxidase activity. This chain is Catalase-peroxidase, found in Salmonella schwarzengrund (strain CVM19633).